A 114-amino-acid polypeptide reads, in one-letter code: UPF0339 protein plu2779 (114 aa).

2 repeat units span residues 11–59 (TKNK…NFEI) and 62–110 (NKSG…VRDL).

It belongs to the UPF0339 family. Duplicated subfamily.

The sequence is that of UPF0339 protein plu2779 from Photorhabdus laumondii subsp. laumondii (strain DSM 15139 / CIP 105565 / TT01) (Photorhabdus luminescens subsp. laumondii).